A 69-amino-acid chain; its full sequence is MSVLTPLLLRGLTGSARRLPVPRAKIHSLPPEGKLGIMELAVGLTSCFVTFLLPAGWILSHLETYRRPE.

The N-terminal 25 residues, methionine 1 to lysine 25, are a transit peptide targeting the mitochondrion. The short motif at serine 2–leucine 19 is the SIFI-degron element. The Mitochondrial matrix portion of the chain corresponds to isoleucine 26–glycine 36. A helical membrane pass occupies residues isoleucine 37 to serine 60. Topologically, residues histidine 61–glutamate 69 are mitochondrial intermembrane.

The protein belongs to the cytochrome c oxidase VIII family. As to quaternary structure, component of the cytochrome c oxidase (complex IV, CIV), a multisubunit enzyme composed of 14 subunits. The complex is composed of a catalytic core of 3 subunits MT-CO1, MT-CO2 and MT-CO3, encoded in the mitochondrial DNA, and 11 supernumerary subunits COX4I1 (or COX4I2), COX5A, COX5B, COX6A1 (or COX6A2), COX6B1 (or COX6B2), COX6C, COX7A2 (or COX7A1), COX7B, COX7C, COX8A and NDUFA4, which are encoded in the nuclear genome. The complex exists as a monomer or a dimer and forms supercomplexes (SCs) in the inner mitochondrial membrane with NADH-ubiquinone oxidoreductase (complex I, CI) and ubiquinol-cytochrome c oxidoreductase (cytochrome b-c1 complex, complex III, CIII), resulting in different assemblies (supercomplex SCI(1)III(2)IV(1) and megacomplex MCI(2)III(2)IV(2)). In response to mitochondrial stress, the precursor protein is ubiquitinated by the SIFI complex in the cytoplasm before mitochondrial import, leading to its degradation. Within the SIFI complex, UBR4 initiates ubiquitin chain that are further elongated or branched by KCMF1. In terms of tissue distribution, widely expressed.

The protein localises to the mitochondrion inner membrane. Its pathway is energy metabolism; oxidative phosphorylation. Its function is as follows. Component of the cytochrome c oxidase, the last enzyme in the mitochondrial electron transport chain which drives oxidative phosphorylation. The respiratory chain contains 3 multisubunit complexes succinate dehydrogenase (complex II, CII), ubiquinol-cytochrome c oxidoreductase (cytochrome b-c1 complex, complex III, CIII) and cytochrome c oxidase (complex IV, CIV), that cooperate to transfer electrons derived from NADH and succinate to molecular oxygen, creating an electrochemical gradient over the inner membrane that drives transmembrane transport and the ATP synthase. Cytochrome c oxidase is the component of the respiratory chain that catalyzes the reduction of oxygen to water. Electrons originating from reduced cytochrome c in the intermembrane space (IMS) are transferred via the dinuclear copper A center (CU(A)) of subunit 2 and heme A of subunit 1 to the active site in subunit 1, a binuclear center (BNC) formed by heme A3 and copper B (CU(B)). The BNC reduces molecular oxygen to 2 water molecules using 4 electrons from cytochrome c in the IMS and 4 protons from the mitochondrial matrix. In Homo sapiens (Human), this protein is Cytochrome c oxidase subunit 8A, mitochondrial (COX8A).